A 77-amino-acid chain; its full sequence is Translation initiation factor IF-1, chloroplastic (77 aa).

Residues 1 to 72 (MNKQGLFQME…TKGRIVYRQR (72 aa)) enclose the S1-like domain.

The protein belongs to the IF-1 family. In terms of assembly, component of the 30S ribosomal translation pre-initiation complex which assembles on the 30S ribosome in the order IF-2 and IF-3, IF-1 and N-formylmethionyl-tRNA(fMet); mRNA recruitment can occur at any time during PIC assembly.

The protein resides in the plastid. The protein localises to the chloroplast. Its function is as follows. One of the essential components for the initiation of protein synthesis. Stabilizes the binding of IF-2 and IF-3 on the 30S subunit to which N-formylmethionyl-tRNA(fMet) subsequently binds. Helps modulate mRNA selection, yielding the 30S pre-initiation complex (PIC). Upon addition of the 50S ribosomal subunit IF-1, IF-2 and IF-3 are released leaving the mature 70S translation initiation complex. The sequence is that of Translation initiation factor IF-1, chloroplastic from Nephroselmis olivacea (Green alga).